Consider the following 374-residue polypeptide: Ribosomal large subunit pseudouridine synthase D (374 aa).

Residues Met1 to Ser20 are disordered. Over residues Asn8 to Asp17 the composition is skewed to acidic residues. Residues Gly39–Asp112 enclose the S4 RNA-binding domain. Asp160 is an active-site residue.

This sequence belongs to the pseudouridine synthase RluA family.

The protein localises to the cytoplasm. It catalyses the reaction uridine(1911/1915/1917) in 23S rRNA = pseudouridine(1911/1915/1917) in 23S rRNA. Functionally, responsible for synthesis of pseudouridine from uracil at positions 1911, 1915 and 1917 in 23S ribosomal RNA. The chain is Ribosomal large subunit pseudouridine synthase D (rluD) from Neisseria meningitidis serogroup A / serotype 4A (strain DSM 15465 / Z2491).